Consider the following 410-residue polypeptide: Arginine deiminase (410 aa).

C400 acts as the Amidino-cysteine intermediate in catalysis.

The protein belongs to the arginine deiminase family.

It localises to the cytoplasm. It catalyses the reaction L-arginine + H2O = L-citrulline + NH4(+). The protein operates within amino-acid degradation; L-arginine degradation via ADI pathway; carbamoyl phosphate from L-arginine: step 1/2. The sequence is that of Arginine deiminase from Streptococcus agalactiae serotype Ia (strain ATCC 27591 / A909 / CDC SS700).